A 395-amino-acid chain; its full sequence is MVKLPSASRIRSLATVPSTATRAFATVNPTPPAAQPTKSKPRFEKLDDGLTFDDFLSGDVPPENERVVLGNTKQPRLPSFLKHPIPTGASYSGIKKELRGLGLHTVCEEAKCPNIGECWGGGKGNATATIMLMGDQCTRGCRFCSVKTSRAPPPLDVHEPENTAEAISRWGLGYIVLTSVDRDDLVDGGAAHIASTISKIKQKAPNILVEALTPDFATKGVNVIHTVASSGLDVFAHNVETVERCTPFVRDRRAGFSQSLKVLEEAKKGAKAAGREILTKSSIMLGVGEMEEEIHETLRRLRASDVDVVTFGQYMRPTKRHMKVDRYVEPEEFAKWKNVAEGMGFLYVASGPLVRSSYKAGEFFIENVLKKRRAAAAEHAASQLSTQPPEIAAKV.

The N-terminal 24 residues, 1–24 (MVKLPSASRIRSLATVPSTATRAF), are a transit peptide targeting the mitochondrion. Residues Cys-107, Cys-112, Cys-118, Cys-137, Cys-141, Cys-144, and Ser-357 each contribute to the [4Fe-4S] cluster site. The region spanning 122–346 (GKGNATATIM…KNVAEGMGFL (225 aa)) is the Radical SAM core domain.

The protein belongs to the radical SAM superfamily. Lipoyl synthase family. [4Fe-4S] cluster is required as a cofactor.

The protein resides in the mitochondrion. The catalysed reaction is [[Fe-S] cluster scaffold protein carrying a second [4Fe-4S](2+) cluster] + N(6)-octanoyl-L-lysyl-[protein] + 2 oxidized [2Fe-2S]-[ferredoxin] + 2 S-adenosyl-L-methionine + 4 H(+) = [[Fe-S] cluster scaffold protein] + N(6)-[(R)-dihydrolipoyl]-L-lysyl-[protein] + 4 Fe(3+) + 2 hydrogen sulfide + 2 5'-deoxyadenosine + 2 L-methionine + 2 reduced [2Fe-2S]-[ferredoxin]. Its pathway is protein modification; protein lipoylation via endogenous pathway; protein N(6)-(lipoyl)lysine from octanoyl-[acyl-carrier-protein]: step 2/2. In terms of biological role, catalyzes the radical-mediated insertion of two sulfur atoms into the C-6 and C-8 positions of the octanoyl moiety bound to the lipoyl domains of lipoate-dependent enzymes, thereby converting the octanoylated domains into lipoylated derivatives. This is Lipoyl synthase, mitochondrial from Cryptococcus neoformans var. neoformans serotype D (strain B-3501A) (Filobasidiella neoformans).